A 291-amino-acid polypeptide reads, in one-letter code: Ribosomal RNA small subunit methyltransferase A (291 aa).

6 residues coordinate S-adenosyl-L-methionine: His-37, Leu-39, Gly-64, Glu-85, Asp-110, and Asn-131.

This sequence belongs to the class I-like SAM-binding methyltransferase superfamily. rRNA adenine N(6)-methyltransferase family. RsmA subfamily.

The protein resides in the cytoplasm. It carries out the reaction adenosine(1518)/adenosine(1519) in 16S rRNA + 4 S-adenosyl-L-methionine = N(6)-dimethyladenosine(1518)/N(6)-dimethyladenosine(1519) in 16S rRNA + 4 S-adenosyl-L-homocysteine + 4 H(+). In terms of biological role, specifically dimethylates two adjacent adenosines (A1518 and A1519) in the loop of a conserved hairpin near the 3'-end of 16S rRNA in the 30S particle. May play a critical role in biogenesis of 30S subunits. The sequence is that of Ribosomal RNA small subunit methyltransferase A from Dehalococcoides mccartyi (strain ATCC BAA-2266 / KCTC 15142 / 195) (Dehalococcoides ethenogenes (strain 195)).